The chain runs to 548 residues: MRILGIEGTAWAASASVFETPDPARVTDDDHVFIETDAYAPDSGGIHPREAAEHMGEAIPTVVETAIEHTHGRAGRDGDDSAPIDAVAFARGPGLGPCLRIVATAARAVAQRFDVPLVGVNHMVAHLEVGRHRSGFDSPVCLNASGANAHILGYRNGRYRVLGETMDTGVGNAIDKFTRHIGWSHPGGPKVEQHARDGEYHELPYVVKGMDFSFSGIMSAAKQAVDDGVPVENVCRGMEETIFAMLTEVSERALSLTGADELVLGGGVGQNARLQRMLGEMCEQREAEFYAPENRFLRDNAGMIAMLGAKMYAAGDTIAIEDSRIDSNFRPDEVAVTWRGPEESVDSYRMGGDEVQGAEATVHFDGDRVIKVRVPRSYRHPTLDERLRTERTRQEARLTSEARRNGVPTPLVRDVDPQESRIVFQRVGDTDLREGLSEGRVADVGRWLARIHDAGFVHGDPTTRNVRVGGRDEQADRTTLIDFGLGYYTQEAEDHAMDLHVLAQSLAGTADDPETLLSAAEDAYRTESDHADAVFASLDDIEGRGRYQ.

The kae1 stretch occupies residues 1-338; it reads MRILGIEGTA…FRPDEVAVTW (338 aa). H122 and H126 together coordinate Fe cation. Residues 143–147, D175, G188, E192, and N271 contribute to the L-threonylcarbamoyladenylate site; that span reads NASGA. Residue D299 coordinates Fe cation. In terms of domain architecture, Protein kinase spans 349-548; sequence RMGGDEVQGA…DDIEGRGRYQ (200 aa). ATP contacts are provided by residues 355 to 362 and K371; that span reads VQGAEATV. The span at 390 to 404 shows a compositional bias: basic and acidic residues; it reads ERTRQEARLTSEARR. Positions 390–413 are disordered; sequence ERTRQEARLTSEARRNGVPTPLVR. Catalysis depends on D460, which acts as the Proton acceptor; for kinase activity.

This sequence in the N-terminal section; belongs to the KAE1 / TsaD family. In the C-terminal section; belongs to the protein kinase superfamily. Tyr protein kinase family. BUD32 subfamily. Component of the KEOPS complex that consists of Kae1, Bud32, Cgi121 and Pcc1; the whole complex dimerizes. It depends on Fe(2+) as a cofactor.

It is found in the cytoplasm. It carries out the reaction L-seryl-[protein] + ATP = O-phospho-L-seryl-[protein] + ADP + H(+). The enzyme catalyses L-threonyl-[protein] + ATP = O-phospho-L-threonyl-[protein] + ADP + H(+). It catalyses the reaction L-threonylcarbamoyladenylate + adenosine(37) in tRNA = N(6)-L-threonylcarbamoyladenosine(37) in tRNA + AMP + H(+). Functionally, required for the formation of a threonylcarbamoyl group on adenosine at position 37 (t(6)A37) in tRNAs that read codons beginning with adenine. Is a component of the KEOPS complex that is probably involved in the transfer of the threonylcarbamoyl moiety of threonylcarbamoyl-AMP (TC-AMP) to the N6 group of A37. The Kae1 domain likely plays a direct catalytic role in this reaction. The Bud32 domain probably displays kinase activity that regulates Kae1 function. In Haloarcula marismortui (strain ATCC 43049 / DSM 3752 / JCM 8966 / VKM B-1809) (Halobacterium marismortui), this protein is Probable bifunctional tRNA threonylcarbamoyladenosine biosynthesis protein.